The primary structure comprises 457 residues: Cysteine--tRNA ligase (457 aa).

Cys-27 is a binding site for Zn(2+). The short motif at 29 to 39 is the 'HIGH' region element; that stretch reads PTVYDFAHIGN. Cys-211, His-236, and Glu-240 together coordinate Zn(2+). Residues 269-273 carry the 'KMSKS' region motif; that stretch reads KMSKS. Lys-272 contacts ATP.

This sequence belongs to the class-I aminoacyl-tRNA synthetase family. As to quaternary structure, monomer. It depends on Zn(2+) as a cofactor.

Its subcellular location is the cytoplasm. The catalysed reaction is tRNA(Cys) + L-cysteine + ATP = L-cysteinyl-tRNA(Cys) + AMP + diphosphate. The polypeptide is Cysteine--tRNA ligase (Ehrlichia ruminantium (strain Gardel)).